Consider the following 39-residue polypeptide: Photosystem II reaction center protein J (39 aa).

A helical membrane pass occupies residues 7-27 (IPLWLIGTIVGILVIGLIGIY).

The protein belongs to the PsbJ family. PSII is composed of 1 copy each of membrane proteins PsbA, PsbB, PsbC, PsbD, PsbE, PsbF, PsbH, PsbI, PsbJ, PsbK, PsbL, PsbM, PsbT, PsbX, PsbY, PsbZ, Psb30/Ycf12, at least 3 peripheral proteins of the oxygen-evolving complex and a large number of cofactors. It forms dimeric complexes.

The protein localises to the plastid. Its subcellular location is the chloroplast thylakoid membrane. In terms of biological role, one of the components of the core complex of photosystem II (PSII). PSII is a light-driven water:plastoquinone oxidoreductase that uses light energy to abstract electrons from H(2)O, generating O(2) and a proton gradient subsequently used for ATP formation. It consists of a core antenna complex that captures photons, and an electron transfer chain that converts photonic excitation into a charge separation. The chain is Photosystem II reaction center protein J from Welwitschia mirabilis (Tree tumbo).